Here is a 216-residue protein sequence, read N- to C-terminus: Peptide methionine sulfoxide reductase MsrA (216 aa).

Residue Cys58 is part of the active site.

Belongs to the MsrA Met sulfoxide reductase family.

The catalysed reaction is L-methionyl-[protein] + [thioredoxin]-disulfide + H2O = L-methionyl-(S)-S-oxide-[protein] + [thioredoxin]-dithiol. The enzyme catalyses [thioredoxin]-disulfide + L-methionine + H2O = L-methionine (S)-S-oxide + [thioredoxin]-dithiol. Has an important function as a repair enzyme for proteins that have been inactivated by oxidation. Catalyzes the reversible oxidation-reduction of methionine sulfoxide in proteins to methionine. The chain is Peptide methionine sulfoxide reductase MsrA from Azotobacter vinelandii (strain DJ / ATCC BAA-1303).